The chain runs to 647 residues: Threonine--tRNA ligase (647 aa).

The 61-residue stretch at 1-61 folds into the TGS domain; that stretch reads MINITFPDGA…TEDGSIEIVT (61 aa). Positions 242–540 are catalytic; the sequence is DHRKLGKELD…LIENYKGAFP (299 aa). Zn(2+) is bound by residues cysteine 336, histidine 387, and histidine 517.

It belongs to the class-II aminoacyl-tRNA synthetase family. In terms of assembly, homodimer. Zn(2+) serves as cofactor.

Its subcellular location is the cytoplasm. It catalyses the reaction tRNA(Thr) + L-threonine + ATP = L-threonyl-tRNA(Thr) + AMP + diphosphate + H(+). Catalyzes the attachment of threonine to tRNA(Thr) in a two-step reaction: L-threonine is first activated by ATP to form Thr-AMP and then transferred to the acceptor end of tRNA(Thr). Also edits incorrectly charged L-seryl-tRNA(Thr). The protein is Threonine--tRNA ligase of Streptococcus pneumoniae (strain 70585).